Reading from the N-terminus, the 154-residue chain is Lipoprotein signal peptidase (154 aa).

A run of 3 helical transmembrane segments spans residues 4 to 24 (IIIPIITILLIALDQLSKLWI), 62 to 82 (LFTLITIFVVGVAIIYLMKHI), and 84 to 104 (GSYWLLISLTLIISGGLGNFI). Residues aspartate 114 and aspartate 130 contribute to the active site. Residues 125 to 145 (IFNVADSYLTIGIICLMIALW) traverse the membrane as a helical segment.

The protein belongs to the peptidase A8 family.

It is found in the cell membrane. It catalyses the reaction Release of signal peptides from bacterial membrane prolipoproteins. Hydrolyzes -Xaa-Yaa-Zaa-|-(S,diacylglyceryl)Cys-, in which Xaa is hydrophobic (preferably Leu), and Yaa (Ala or Ser) and Zaa (Gly or Ala) have small, neutral side chains.. It functions in the pathway protein modification; lipoprotein biosynthesis (signal peptide cleavage). Functionally, this protein specifically catalyzes the removal of signal peptides from prolipoproteins. The sequence is that of Lipoprotein signal peptidase from Streptococcus agalactiae serotype V (strain ATCC BAA-611 / 2603 V/R).